The chain runs to 311 residues: Homoserine kinase (311 aa).

88–98 (PEGLGLGSSGA) is an ATP binding site.

This sequence belongs to the GHMP kinase family. Homoserine kinase subfamily.

The protein resides in the cytoplasm. It catalyses the reaction L-homoserine + ATP = O-phospho-L-homoserine + ADP + H(+). Its pathway is amino-acid biosynthesis; L-threonine biosynthesis; L-threonine from L-aspartate: step 4/5. Catalyzes the ATP-dependent phosphorylation of L-homoserine to L-homoserine phosphate. This is Homoserine kinase from Saccharolobus islandicus (strain Y.N.15.51 / Yellowstone #2) (Sulfolobus islandicus).